The sequence spans 79 residues: Acyl carrier protein 2 (79 aa).

Positions 2 to 77 constitute a Carrier domain; it reads DDIETRVRKL…QAIDYLEEAV (76 aa). At Ser-37 the chain carries O-(pantetheine 4'-phosphoryl)serine.

Belongs to the acyl carrier protein (ACP) family. Post-translationally, 4'-phosphopantetheine is transferred from CoA to a specific serine of apo-ACP by AcpS. This modification is essential for activity because fatty acids are bound in thioester linkage to the sulfhydryl of the prosthetic group.

It is found in the cytoplasm. It functions in the pathway lipid metabolism; fatty acid biosynthesis. Functionally, carrier of the growing fatty acid chain in fatty acid biosynthesis. The polypeptide is Acyl carrier protein 2 (Pseudomonas aeruginosa (strain ATCC 15692 / DSM 22644 / CIP 104116 / JCM 14847 / LMG 12228 / 1C / PRS 101 / PAO1)).